We begin with the raw amino-acid sequence, 412 residues long: Nucleoside transporter 1 (412 aa).

The tract at residues 1–21 (MSKIKESSSGILGASNNTNKE) is disordered. Over 1-29 (MSKIKESSSGILGASNNTNKESSQKSARS) the chain is Cytoplasmic. Over residues 7–21 (SSSGILGASNNTNKE) the composition is skewed to polar residues. A helical membrane pass occupies residues 30-50 (IALPMTYALIGVSCLNVWNSA). At 51–56 (LGLNIK) the chain is on the extracellular side. Residues 57–77 (ITYNIFQMAGLLTSSVLALFV) traverse the membrane as a helical segment. The Cytoplasmic portion of the chain corresponds to 78 to 81 (NYPR). Residues 82–102 (VLLPTSLGVLTLLCAGFQIAH) form a helical membrane-spanning segment. The Extracellular portion of the chain corresponds to 103–114 (QTFSDSAFDTYC). The chain crosses the membrane as a helical span at residues 115-135 (LAAFITIGLMAGIAQTIAFAI). The Cytoplasmic segment spans residues 136–144 (GTTKESNMS). A helical transmembrane segment spans residues 145–165 (GYISAGIGMSGVLIFCINLIL). At 166 to 181 (DYIVSDEKIYEINKSK) the chain is on the extracellular side. Residues 182–202 (LLCLFSISEIFLIITIVCCVL) traverse the membrane as a helical segment. Topologically, residues 203-240 (YIDLFPKNDNNKDSTDIEKAEEKEGRLPLIEIIKDGYK) are cytoplasmic. The chain crosses the membrane as a helical span at residues 241 to 261 (AILSIFLVNWLSLQLFPGIGH). At 262 to 271 (KKWQEKHGMT) the chain is on the extracellular side. Residues 272–294 (DNNVTIIVGMFQVFDFISRYPPN) traverse the membrane as a helical segment. At 295–310 (FTHIKIFKYFTFSLNT) the chain is on the cytoplasmic side. Residues 311-331 (LLIGNFLRLLFIPWFVLNAVI) traverse the membrane as a helical segment. The Extracellular portion of the chain corresponds to 332–343 (SSSFFTNIVQQC). Residues 344-364 (VCIAALAFTNGWFNTVPFIVF) traverse the membrane as a helical segment. The Cytoplasmic segment spans residues 365–382 (VKELKKVKHQKDIETISR). A helical membrane pass occupies residues 383 to 403 (IMVVSLFFGLFFGMLTTCLYD). The Extracellular segment spans residues 404–412 (YFPIGILNN).

It belongs to the SLC29A/ENT transporter (TC 2.A.57) family.

The protein localises to the cell membrane. The enzyme catalyses inosine(in) = inosine(out). It catalyses the reaction adenosine(in) = adenosine(out). The catalysed reaction is hypoxanthine(out) = hypoxanthine(in). It carries out the reaction guanosine(in) = guanosine(out). The enzyme catalyses guanine(out) = guanine(in). It catalyses the reaction thymidine(in) = thymidine(out). The catalysed reaction is uridine(out) = uridine(in). It carries out the reaction uracil(in) = uracil(out). The enzyme catalyses thymine(out) = thymine(in). It catalyses the reaction adenine(out) = adenine(in). The catalysed reaction is cytosine(out) = cytosine(in). It carries out the reaction xanthine(out) = xanthine(in). In terms of biological role, nucleoside and nucleobase transporter with a broad substrate specificity. The sequence is that of Nucleoside transporter 1 from Plasmodium berghei (strain Anka).